Consider the following 489-residue polypeptide: UDP-N-acetylmuramoylalanine--D-glutamate ligase (489 aa).

Position 126-132 (126-132 (GTNGKTT)) interacts with ATP.

It belongs to the MurCDEF family.

Its subcellular location is the cytoplasm. It carries out the reaction UDP-N-acetyl-alpha-D-muramoyl-L-alanine + D-glutamate + ATP = UDP-N-acetyl-alpha-D-muramoyl-L-alanyl-D-glutamate + ADP + phosphate + H(+). The protein operates within cell wall biogenesis; peptidoglycan biosynthesis. In terms of biological role, cell wall formation. Catalyzes the addition of glutamate to the nucleotide precursor UDP-N-acetylmuramoyl-L-alanine (UMA). In Mycobacterium avium (strain 104), this protein is UDP-N-acetylmuramoylalanine--D-glutamate ligase.